Consider the following 410-residue polypeptide: Na(+)-translocating NADH-quinone reductase subunit B (410 aa).

Helical transmembrane passes span methionine 56–glycine 76, leucine 119–tryptophan 139, and serine 159–isoleucine 179. At threonine 232 the chain carries FMN phosphoryl threonine. 5 helical membrane passes run glycine 266–alanine 286, isoleucine 293–serine 313, methionine 318–phenylalanine 338, serine 347–isoleucine 367, and glycine 377–alanine 397.

The protein belongs to the NqrB/RnfD family. In terms of assembly, composed of six subunits; NqrA, NqrB, NqrC, NqrD, NqrE and NqrF. FMN is required as a cofactor.

The protein localises to the cell inner membrane. The enzyme catalyses a ubiquinone + n Na(+)(in) + NADH + H(+) = a ubiquinol + n Na(+)(out) + NAD(+). Functionally, NQR complex catalyzes the reduction of ubiquinone-1 to ubiquinol by two successive reactions, coupled with the transport of Na(+) ions from the cytoplasm to the periplasm. NqrA to NqrE are probably involved in the second step, the conversion of ubisemiquinone to ubiquinol. The polypeptide is Na(+)-translocating NADH-quinone reductase subunit B (Neisseria meningitidis serogroup B (strain ATCC BAA-335 / MC58)).